The sequence spans 272 residues: ATP phosphoribosyltransferase regulatory subunit (272 aa).

It belongs to the class-II aminoacyl-tRNA synthetase family. HisZ subfamily. As to quaternary structure, heteromultimer composed of HisG and HisZ subunits.

It is found in the cytoplasm. Its pathway is amino-acid biosynthesis; L-histidine biosynthesis; L-histidine from 5-phospho-alpha-D-ribose 1-diphosphate: step 1/9. Functionally, required for the first step of histidine biosynthesis. May allow the feedback regulation of ATP phosphoribosyltransferase activity by histidine. The chain is ATP phosphoribosyltransferase regulatory subunit from Staphylococcus aureus (strain Mu3 / ATCC 700698).